Consider the following 512-residue polypeptide: Maturase K (512 aa).

Belongs to the intron maturase 2 family. MatK subfamily.

The protein localises to the plastid. It localises to the chloroplast. Usually encoded in the trnK tRNA gene intron. Probably assists in splicing its own and other chloroplast group II introns. The protein is Maturase K of Amorphophallus abyssinicus (Black arum).